The chain runs to 379 residues: Glucose-1-phosphate adenylyltransferase (379 aa).

Alpha-D-glucose 1-phosphate is bound by residues G164, 179–180 (EK), and S190.

This sequence belongs to the bacterial/plant glucose-1-phosphate adenylyltransferase family. Homotetramer.

The catalysed reaction is alpha-D-glucose 1-phosphate + ATP + H(+) = ADP-alpha-D-glucose + diphosphate. It functions in the pathway glycan biosynthesis; glycogen biosynthesis. Functionally, involved in the biosynthesis of ADP-glucose, a building block required for the elongation reactions to produce glycogen. Catalyzes the reaction between ATP and alpha-D-glucose 1-phosphate (G1P) to produce pyrophosphate and ADP-Glc. The protein is Glucose-1-phosphate adenylyltransferase of Streptococcus equi subsp. zooepidemicus (strain H70).